A 166-amino-acid chain; its full sequence is Lymphocyte antigen 6G6e (166 aa).

The first 18 residues, methionine 1–glycine 18, serve as a signal peptide directing secretion. Positions leucine 28–leucine 151 constitute a UPAR/Ly6 domain. Intrachain disulfides connect cysteine 30-cysteine 52, cysteine 33-cysteine 39, cysteine 110-cysteine 129, and cysteine 130-cysteine 135.

Interacts with CHRNA4. Post-translationally, O-glycosylated. Contains sialic acid residues.

It localises to the cell surface. The protein localises to the cell membrane. It is found in the cell projection. Its function is as follows. Believed to act as a modulator of nicotinic acetylcholine receptors (nAChRs) activity. In vitro potentiates alpha-3:beta-4-containing nAChRs maximum response by increasing peak current and slowing down receptor desensitization; the activity is dependent on its cell surface localization. In Mus musculus (Mouse), this protein is Lymphocyte antigen 6G6e (Ly6g6e).